We begin with the raw amino-acid sequence, 398 residues long: Phosphoglycerate kinase (398 aa).

Substrate-binding positions include 21–23 (DIN), arginine 36, 59–62 (HFGR), arginine 118, and arginine 151. ATP contacts are provided by residues lysine 201, glutamate 323, and 353-356 (GGDT).

It belongs to the phosphoglycerate kinase family. As to quaternary structure, monomer.

Its subcellular location is the cytoplasm. It carries out the reaction (2R)-3-phosphoglycerate + ATP = (2R)-3-phospho-glyceroyl phosphate + ADP. The protein operates within carbohydrate degradation; glycolysis; pyruvate from D-glyceraldehyde 3-phosphate: step 2/5. In Ruegeria pomeroyi (strain ATCC 700808 / DSM 15171 / DSS-3) (Silicibacter pomeroyi), this protein is Phosphoglycerate kinase.